We begin with the raw amino-acid sequence, 420 residues long: Glutamate dehydrogenase (420 aa).

Residue K105 is part of the active site. 220–226 (GYGNAGY) lines the NAD(+) pocket.

The protein belongs to the Glu/Leu/Phe/Val dehydrogenases family. In terms of assembly, homohexamer.

The protein localises to the cytoplasm. It carries out the reaction L-glutamate + NAD(+) + H2O = 2-oxoglutarate + NH4(+) + NADH + H(+). The enzyme catalyses L-glutamate + NADP(+) + H2O = 2-oxoglutarate + NH4(+) + NADPH + H(+). This chain is Glutamate dehydrogenase (gdhA), found in Pyrococcus endeavori.